A 490-amino-acid polypeptide reads, in one-letter code: Velvet complex subunit 2 (490 aa).

Disordered regions lie at residues 23-148 (LYHH…ESQQ) and 295-316 (YQTQ…TYGP). Basic residues predominate over residues 54–70 (PPSHHFQLHPGHGHHQQ). Residues 112–131 (AAEHRDHPQHALDEPSRSHD) show a composition bias toward basic and acidic residues. Residues 164–474 (ATGRRYHLDV…AAQGIKIPIR (311 aa)) enclose the Velvet domain. Residues 295 to 313 (YQTQPTYSQGSSAYPSNGT) show a composition bias toward polar residues.

It belongs to the velvet family. VelB subfamily. In terms of assembly, component of the heterotrimeric velvet complex composed of LAE1, VEL1 and VEL2; VEL1 acting as a bridging protein between LAE1 and VEL2. Forms a heterodimeric complex with VOS1; the formation of the VEL2-VOS1 complex is light-dependent.

Its subcellular location is the nucleus. It is found in the cytoplasm. Functionally, component of the velvet transcription factor complex that controls sexual/asexual developmental ratio in response to light, promoting sexual development in the darkness while stimulating asexual sporulation under illumination. The velvet complex acts as a global regulator for secondary metabolite gene expression. Component of the VEL2-VOS1 heterodimeric complex that plays a dual role in activating genes associated with spore maturation and repressing certain development-associated genes. The VEL2-VOS1 complex binds DNA through the DNA-binding domain of VOS1 that recognizes an 11-nucleotide consensus sequence 5'-CTGGCCGCGGC-3' consisting of two motifs in the promoters of key developmental regulatory genes. Regulates expression of cellulase-encoding genes such as the cellobiohydrolase-encoding genes cbh1 and cbh2, the endo-beta-1,4-glucanase-encoding genes egl1 and egl2, and the beta-glucosidase-encoding gene bgl1. In Hypocrea jecorina (strain QM6a) (Trichoderma reesei), this protein is Velvet complex subunit 2.